Reading from the N-terminus, the 546-residue chain is Alpha-isocomene synthase (546 aa).

Mg(2+)-binding residues include Asp299, Asp303, Asp443, and Glu451. The DDXXD motif motif lies at 299 to 303; that stretch reads DDTYD.

It belongs to the terpene synthase family. Tpsa subfamily. Mg(2+) is required as a cofactor. It depends on Mn(2+) as a cofactor. In terms of tissue distribution, highly expressed in roots, lower levels in stems and leaves and detected in disk florets, but not in ray florets.

It catalyses the reaction (2E,6E)-farnesyl diphosphate = (-)-alpha-isocomene + diphosphate. The protein operates within secondary metabolite biosynthesis; terpenoid biosynthesis. In terms of biological role, sesquiterpene synthase involved in the biosynthesis of alpha-isocomene as the major product and detectable amounts of beta-caryophyllene, beta-isocomene, silphinene and modeph-2-ene. Produces exclusively the (-)-(E)-beta caryophyllene enantiomer. The polypeptide is Alpha-isocomene synthase (Matricaria chamomilla var. recutita (German chamomile)).